The chain runs to 349 residues: Two pore potassium channel b (349 aa).

The disordered stretch occupies residues 1-53 (MAALDQQPLLHDGGDQKPPPEGAARRFRRCRTAPSSEPPPTDKDNSSAADAPP). The Cytoplasmic portion of the chain corresponds to 1 to 66 (MAALDQQPLL…FTGGGRPSFR (66 aa)). Residues 67-87 (LVGLLLVAYLLLGTIAFYLAM) form a helical membrane-spanning segment. Positions 100–119 (DALYFCVVTMTTVGYGDLVP) form an intramembrane region, pore-forming. The helical transmembrane segment at 123 to 143 (AAKLLACAFVFAGVAVVGTFL) threads the bilayer. Residues 144-180 (SKAADYLVEKQEALLFRALHSHTMVRAMEMNKVRYKL) lie on the Cytoplasmic side of the membrane. Residues 181–201 (YTAGLLLVAAVASGTVVLWKV) traverse the membrane as a helical segment. The pore-forming intramembrane region spans 208 to 227 (DAFYCVCATVTTLGYGDRSF). Residues 234–254 (AFAVAWITVSTVVVALFFLYA) traverse the membrane as a helical segment. Residues 255 to 349 (AELYTERRQR…PTPDPPPSLR (95 aa)) are Cytoplasmic-facing. 2 EF-hand domains span residues 271 to 306 (LRRRTTNMDLEAADLDGDHRVGAADFVLYKLKELGK) and 310 to 345 (EDISEFLDEFDNLDADHSGTLSPADLAAAQPTPDPP). Positions 284, 286, 288, 290, 295, 323, 325, 327, 329, and 334 each coordinate Ca(2+). The segment at 326–349 (HSGTLSPADLAAAQPTPDPPPSLR) is disordered.

Belongs to the two pore domain potassium channel (TC 1.A.1.7) family. In terms of assembly, homodimer.

The protein localises to the vacuole membrane. In terms of biological role, highly selective inward-rectifying potassium channel that is specifically located in the tonoplast of protein storage vacuoles. Functions independently of the voltage difference across the membrane. This chain is Two pore potassium channel b (TPKB), found in Oryza sativa subsp. japonica (Rice).